We begin with the raw amino-acid sequence, 226 residues long: Ribose-5-phosphate isomerase A (226 aa).

Residues 29 to 32, 84 to 87, and 97 to 100 each bind substrate; these read TGST, DGAD, and KGGG. Residue Glu106 is the Proton acceptor of the active site. A substrate-binding site is contributed by Lys124.

The protein belongs to the ribose 5-phosphate isomerase family. As to quaternary structure, homodimer.

The enzyme catalyses aldehydo-D-ribose 5-phosphate = D-ribulose 5-phosphate. Its pathway is carbohydrate degradation; pentose phosphate pathway; D-ribose 5-phosphate from D-ribulose 5-phosphate (non-oxidative stage): step 1/1. Catalyzes the reversible conversion of ribose-5-phosphate to ribulose 5-phosphate. This chain is Ribose-5-phosphate isomerase A, found in Methanothermobacter thermautotrophicus (strain ATCC 29096 / DSM 1053 / JCM 10044 / NBRC 100330 / Delta H) (Methanobacterium thermoautotrophicum).